Consider the following 502-residue polypeptide: UTP--glucose-1-phosphate uridylyltransferase 2 (502 aa).

Positions 1–20 (MMKPDLNSPLPQSPQLQAFG) are disordered. Polar residues predominate over residues 9–20 (PLPQSPQLQAFG). UTP-binding positions include 114–117 (LNGG), K128, Q191, and G220. 116 to 117 (GG) is a substrate binding site. Substrate is bound by residues H221 and 249-251 (NVD). UTP contacts are provided by D251 and K390.

Belongs to the UDPGP type 1 family.

The enzyme catalyses alpha-D-glucose 1-phosphate + UTP + H(+) = UDP-alpha-D-glucose + diphosphate. In terms of biological role, plays a central role as a glucosyl donor in cellular metabolic pathways. The sequence is that of UTP--glucose-1-phosphate uridylyltransferase 2 (ugpB) from Dictyostelium discoideum (Social amoeba).